A 443-amino-acid chain; its full sequence is Glutamate--tRNA ligase 1 (443 aa).

The short motif at 10-20 (PSPTGYIHVGN) is the 'HIGH' region element. A 'KMSKS' region motif is present at residues 241–245 (ALSKR). An ATP-binding site is contributed by Lys244.

It belongs to the class-I aminoacyl-tRNA synthetase family. Glutamate--tRNA ligase type 1 subfamily. Monomer.

The protein localises to the cytoplasm. It carries out the reaction tRNA(Glu) + L-glutamate + ATP = L-glutamyl-tRNA(Glu) + AMP + diphosphate. Functionally, catalyzes the attachment of glutamate to tRNA(Glu) in a two-step reaction: glutamate is first activated by ATP to form Glu-AMP and then transferred to the acceptor end of tRNA(Glu). The sequence is that of Glutamate--tRNA ligase 1 from Ruegeria pomeroyi (strain ATCC 700808 / DSM 15171 / DSS-3) (Silicibacter pomeroyi).